Here is a 238-residue protein sequence, read N- to C-terminus: Pyridoxine 5'-phosphate synthase (238 aa).

3-amino-2-oxopropyl phosphate is bound at residue N7. D9–H10 is a 1-deoxy-D-xylulose 5-phosphate binding site. Residue R18 coordinates 3-amino-2-oxopropyl phosphate. H43 functions as the Proton acceptor in the catalytic mechanism. 1-deoxy-D-xylulose 5-phosphate-binding residues include R45 and H50. E70 functions as the Proton acceptor in the catalytic mechanism. T100 is a binding site for 1-deoxy-D-xylulose 5-phosphate. The active-site Proton donor is H190. 3-amino-2-oxopropyl phosphate is bound by residues G191 and G212 to H213.

Belongs to the PNP synthase family. Homooctamer; tetramer of dimers.

It localises to the cytoplasm. The enzyme catalyses 3-amino-2-oxopropyl phosphate + 1-deoxy-D-xylulose 5-phosphate = pyridoxine 5'-phosphate + phosphate + 2 H2O + H(+). Its pathway is cofactor biosynthesis; pyridoxine 5'-phosphate biosynthesis; pyridoxine 5'-phosphate from D-erythrose 4-phosphate: step 5/5. In terms of biological role, catalyzes the complicated ring closure reaction between the two acyclic compounds 1-deoxy-D-xylulose-5-phosphate (DXP) and 3-amino-2-oxopropyl phosphate (1-amino-acetone-3-phosphate or AAP) to form pyridoxine 5'-phosphate (PNP) and inorganic phosphate. The polypeptide is Pyridoxine 5'-phosphate synthase (Prochlorococcus marinus (strain MIT 9312)).